The following is a 192-amino-acid chain: UPF0301 protein Bcep18194_A3962 (192 aa).

The protein belongs to the UPF0301 (AlgH) family.

The chain is UPF0301 protein Bcep18194_A3962 from Burkholderia lata (strain ATCC 17760 / DSM 23089 / LMG 22485 / NCIMB 9086 / R18194 / 383).